Here is a 277-residue protein sequence, read N- to C-terminus: Putative protease slr0021 (277 aa).

S85 functions as the Nucleophile in the catalytic mechanism. K137 (proton donor/acceptor) is an active-site residue.

This sequence belongs to the peptidase S49 family.

In Synechocystis sp. (strain ATCC 27184 / PCC 6803 / Kazusa), this protein is Putative protease slr0021.